Consider the following 328-residue polypeptide: Phosphate acyltransferase (328 aa).

Belongs to the PlsX family. In terms of assembly, homodimer. Probably interacts with PlsY.

It is found in the cytoplasm. The catalysed reaction is a fatty acyl-[ACP] + phosphate = an acyl phosphate + holo-[ACP]. Its pathway is lipid metabolism; phospholipid metabolism. Functionally, catalyzes the reversible formation of acyl-phosphate (acyl-PO(4)) from acyl-[acyl-carrier-protein] (acyl-ACP). This enzyme utilizes acyl-ACP as fatty acyl donor, but not acyl-CoA. The polypeptide is Phosphate acyltransferase (Staphylococcus saprophyticus subsp. saprophyticus (strain ATCC 15305 / DSM 20229 / NCIMB 8711 / NCTC 7292 / S-41)).